The following is a 544-amino-acid chain: Lipid II flippase MurJ (544 aa).

14 helical membrane passes run 21–41, 49–69, 90–110, 127–147, 169–189, 191–211, 241–261, 297–317, 338–358, 375–395, 404–424, 431–451, 471–491, and 500–520; these read ILGM…GGAL, YTLF…KFVS, VMLV…PMFA, VVYV…MSLV, IVRI…FNGG, VIAV…GLVV, MFFE…AIPL, LVMI…PTIT, TILF…GPTY, ILLW…NAAI, FAVV…VPLI, GAIL…FIMI, VLSA…GFFI, and AAIV…YCGY.

This sequence belongs to the polysaccharide synthase family.

Its subcellular location is the cell membrane. It functions in the pathway cell wall biogenesis; peptidoglycan biosynthesis. Involved in peptidoglycan biosynthesis. Transports lipid-linked peptidoglycan precursors from the inner to the outer leaflet of the cytoplasmic membrane. Not essential for growth. The polypeptide is Lipid II flippase MurJ (Bacillus subtilis (strain 168)).